The primary structure comprises 378 residues: Pre-B-cell leukemia transcription factor 4 (378 aa).

The span at 1 to 15 shows a compositional bias: pro residues; it reads MAAPLRPVPPQPAPR. Disordered stretches follow at residues 1-24 and 100-125; these read MAAPLRPVPPQPAPRRLPTTAPLG and VSRPEKRGRGAAAGSTATPGGCPNDN. The 193-residue stretch at 22–214 folds into the PBC domain; sequence PLGHDTSDVL…VMTLRSRFLD (193 aa). The segment at 29-107 is PBC-A; the sequence is DVLQQIMAIT…EGVSRPEKRG (79 aa). Residues 109 to 120 are compositionally biased toward low complexity; it reads GAAAGSTATPGG. The interval 110–214 is PBC-B; sequence AAAGSTATPG…VMTLRSRFLD (105 aa). The segment at residues 215-277 is a DNA-binding region (homeobox; TALE-type); that stretch reads ARRKRRNFSK…NKRIRYKKNT (63 aa). Disordered regions lie at residues 291 to 320 and 355 to 378; these read ASTVTKARRPRGQSSCQSTPSPGPCGPLPL and RAAPQPASSPAGESGSFNWDAASN. Low complexity predominate over residues 356–370; that stretch reads AAPQPASSPAGESGS.

This sequence belongs to the TALE/PBX homeobox family. As to expression, almost exclusively expressed in testis.

Its subcellular location is the nucleus. The chain is Pre-B-cell leukemia transcription factor 4 (Pbx4) from Mus musculus (Mouse).